A 263-amino-acid chain; its full sequence is MPEGPEIRRAADHLEAAIKGKLLTDVWFAFAQLKPYESQLTGQMVTRIETRGKALLTHFSNGLTLYSHNQLYGVWRVIDTGEIPHTTRILRVRLQTADKTILLYSASDIEMLTAEQLTTHPFLQRVGPDVLDARLTPEEVKARLLSPRFRNRQFSGLLLDQAFLAGLGNYLRVEILWQSELTGQHKAKDLSEAQLNTLSHALLDIPRLSYATRGQTDENKHHGAQFRFKVFHRDGEACERCGGIIEKTTLSSRPFYWCPHCQK.

Residue P2 is the Schiff-base intermediate with DNA of the active site. E3 (proton donor) is an active-site residue. The active-site Proton donor; for beta-elimination activity is K53. Positions 70, 125, and 169 each coordinate DNA. An FPG-type zinc finger spans residues 229–263; it reads KVFHRDGEACERCGGIIEKTTLSSRPFYWCPHCQK. The active-site Proton donor; for delta-elimination activity is R253.

Belongs to the FPG family. Zn(2+) serves as cofactor.

It carries out the reaction 2'-deoxyribonucleotide-(2'-deoxyribose 5'-phosphate)-2'-deoxyribonucleotide-DNA = a 3'-end 2'-deoxyribonucleotide-(2,3-dehydro-2,3-deoxyribose 5'-phosphate)-DNA + a 5'-end 5'-phospho-2'-deoxyribonucleoside-DNA + H(+). Involved in base excision repair of DNA damaged by oxidation or by mutagenic agents. Acts as a DNA glycosylase that recognizes and removes damaged bases. Has a preference for oxidized pyrimidines, such as thymine glycol, 5,6-dihydrouracil and 5,6-dihydrothymine. Has AP (apurinic/apyrimidinic) lyase activity and introduces nicks in the DNA strand. Cleaves the DNA backbone by beta-delta elimination to generate a single-strand break at the site of the removed base with both 3'- and 5'-phosphates. This chain is Endonuclease 8, found in Salmonella arizonae (strain ATCC BAA-731 / CDC346-86 / RSK2980).